The following is a 495-amino-acid chain: MSKPAAAAPSDPSKPSKPLKEVPGSYGLPVLGAVKDRLDFYWFQGDTEFFRIRMEQHKSTVFRVNYSPGPPGYPDSRGIILLDQKSFSVLLDNSKVDKSDTLLGPYIPNLAFTGGYRVLPYLDTSEAKHTAYKDLIFELLHVNSSRIIPEYNKVFAETAGSWEERIAKSGKAEVFASSDSMITKFLLRTIVHKDPAEPGPASLGPKFRDTYQLWTGVNFAGIAHTPLPHFLEELLFHTFRLPPFLVKKQYKALANFYRTHATEVLDLAEKKYGLDREETVHQLILILGINARLGLHKMIPALIYYLGLLGEDFQAKIAAEVRSAVHKNRAQGEEGVNITTQALLEMPLLRSTVLETLRLTPSIFYIYGRAREDMVIESHDAAFQIKKGELLGGHQYFVMRDPEVFEEPHKFVADRFLGERGKAVLPYLVWSNGRETESPSSSNKQCPAKDVAELITMQFVAEMFLRYDSFEITKDSFINTTELNVHLKSLKKRSV.

C446 serves as a coordination point for heme.

The protein belongs to the cytochrome P450 family. The cofactor is heme.

It carries out the reaction (13S)-hydroperoxy-(9Z,11E)-octadecadienoate = etheroleate + H2O. The enzyme catalyses (13S)-hydroperoxy-(9Z,11E,15Z)-octadecatrienoate = etherolenate + H2O. It functions in the pathway lipid metabolism; oxylipin biosynthesis. Divinyl ether synthase involved in oxylipin biosynthesis. Catalyzes the conversion of (13S)-hydroperoxy-(9Z,11E)-octadecadienoate (13-HPOD) to etheroleate and (13S)-hydroperoxy-(9Z,11E,15Z)-octadecatrienoate (13-HPOT) to etherolenate. Has no activity with the corresponding 9-hydroperoxides (9-HPOD and 9-HPOT). This Selaginella moellendorffii (Spikemoss) protein is Divinyl ether synthase CYP74M3.